Here is a 144-residue protein sequence, read N- to C-terminus: 3-dehydroquinate dehydratase (144 aa).

Y24 serves as the catalytic Proton acceptor. Substrate-binding residues include N73, H79, and D86. H99 serves as the catalytic Proton donor. Substrate is bound by residues L100–S101 and R110.

This sequence belongs to the type-II 3-dehydroquinase family. As to quaternary structure, homododecamer.

It carries out the reaction 3-dehydroquinate = 3-dehydroshikimate + H2O. It participates in metabolic intermediate biosynthesis; chorismate biosynthesis; chorismate from D-erythrose 4-phosphate and phosphoenolpyruvate: step 3/7. In terms of biological role, catalyzes a trans-dehydration via an enolate intermediate. The chain is 3-dehydroquinate dehydratase from Shewanella putrefaciens (strain CN-32 / ATCC BAA-453).